The primary structure comprises 159 residues: Cyclic pyranopterin monophosphate synthase (159 aa).

Residues 76–78 (LCH) and 114–115 (ME) contribute to the substrate site. The active site involves D129.

This sequence belongs to the MoaC family. As to quaternary structure, homohexamer; trimer of dimers.

The enzyme catalyses (8S)-3',8-cyclo-7,8-dihydroguanosine 5'-triphosphate = cyclic pyranopterin phosphate + diphosphate. Its pathway is cofactor biosynthesis; molybdopterin biosynthesis. Functionally, catalyzes the conversion of (8S)-3',8-cyclo-7,8-dihydroguanosine 5'-triphosphate to cyclic pyranopterin monophosphate (cPMP). The protein is Cyclic pyranopterin monophosphate synthase of Psychromonas ingrahamii (strain DSM 17664 / CCUG 51855 / 37).